A 537-amino-acid polypeptide reads, in one-letter code: Actin-histidine N-methyltransferase (537 aa).

A compositionally biased stretch (basic residues) spans 1–12; it reads MGKNTKRNKKTK. The disordered stretch occupies residues 1–50; it reads MGKNTKRNKKTKQQQQQPQQNGVTASASGTAVEDFEDQQAASSLPSLNGK. S-adenosyl-L-methionine contacts are provided by residues R114, 143-145, R299, 325-329, and 375-377; these read YQL, DMANH, and NGF. The SET domain maps to 133–364; it reads EGLEIAIFPG…TGEQFFIYYG (232 aa).

It belongs to the class V-like SAM-binding methyltransferase superfamily. SETD3 actin-histidine methyltransferase family.

The protein localises to the cytoplasm. The protein resides in the nucleus. It carries out the reaction L-histidyl-[protein] + S-adenosyl-L-methionine = N(tele)-methyl-L-histidyl-[protein] + S-adenosyl-L-homocysteine + H(+). In terms of biological role, protein-histidine N-methyltransferase that specifically mediates 3-methylhistidine (tele-methylhistidine) methylation of actin at 'His-74'. In Drosophila melanogaster (Fruit fly), this protein is Actin-histidine N-methyltransferase.